Consider the following 406-residue polypeptide: Serine hydroxymethyltransferase (406 aa).

Residues Leu111 and 115–117 (GHL) each bind (6S)-5,6,7,8-tetrahydrofolate. Residue Lys220 is modified to N6-(pyridoxal phosphate)lysine.

This sequence belongs to the SHMT family. As to quaternary structure, homodimer. Pyridoxal 5'-phosphate is required as a cofactor.

It is found in the cytoplasm. The catalysed reaction is (6R)-5,10-methylene-5,6,7,8-tetrahydrofolate + glycine + H2O = (6S)-5,6,7,8-tetrahydrofolate + L-serine. It participates in one-carbon metabolism; tetrahydrofolate interconversion. The protein operates within amino-acid biosynthesis; glycine biosynthesis; glycine from L-serine: step 1/1. Its function is as follows. Catalyzes the reversible interconversion of serine and glycine with tetrahydrofolate (THF) serving as the one-carbon carrier. This reaction serves as the major source of one-carbon groups required for the biosynthesis of purines, thymidylate, methionine, and other important biomolecules. Also exhibits THF-independent aldolase activity toward beta-hydroxyamino acids, producing glycine and aldehydes, via a retro-aldol mechanism. In Mycoplasma pneumoniae (strain ATCC 29342 / M129 / Subtype 1) (Mycoplasmoides pneumoniae), this protein is Serine hydroxymethyltransferase.